The chain runs to 473 residues: Hyaluronidase-2 (473 aa).

The first 20 residues, 1–20 (MRAGLGPIITLALVLEVAWA), serve as a signal peptide directing secretion. Intrachain disulfides connect Cys47/Cys340 and Cys211/Cys227. 2 N-linked (GlcNAc...) asparagine glycosylation sites follow: Asn74 and Asn103. The active-site Proton donor is Glu135. A glycan (N-linked (GlcNAc...) asparagine) is linked at Asn357. One can recognise an EGF-like domain in the interval 361-439 (ATQYCSWTQC…YLGWGGEQCQ (79 aa)). 3 disulfides stabilise this stretch: Cys365–Cys376, Cys370–Cys427, and Cys429–Cys438. A lipid anchor (GPI-anchor amidated aspartate) is attached at Asp448. A propeptide spans 449 to 473 (ASRAWAGAHLASLLGLVAMTLTWTL) (removed in mature form).

Belongs to the glycosyl hydrolase 56 family. Interacts with MST1R.

Its subcellular location is the cell membrane. The enzyme catalyses Random hydrolysis of (1-&gt;4)-linkages between N-acetyl-beta-D-glucosamine and D-glucuronate residues in hyaluronate.. Catalyzes hyaluronan degradation into small fragments that are endocytosed and degraded in lysosomes by HYAL1 and exoglycosidases. Essential for the breakdown of extracellular matrix hyaluronan. In Rattus norvegicus (Rat), this protein is Hyaluronidase-2 (Hyal2).